Reading from the N-terminus, the 155-residue chain is Endoribonuclease YbeY (155 aa).

Positions 114, 118, and 124 each coordinate Zn(2+).

The protein belongs to the endoribonuclease YbeY family. It depends on Zn(2+) as a cofactor.

The protein localises to the cytoplasm. Single strand-specific metallo-endoribonuclease involved in late-stage 70S ribosome quality control and in maturation of the 3' terminus of the 16S rRNA. This chain is Endoribonuclease YbeY, found in Proteus mirabilis (strain HI4320).